A 397-amino-acid chain; its full sequence is LL-diaminopimelate aminotransferase (397 aa).

Positions 14 and 41 each coordinate substrate. Pyridoxal 5'-phosphate is bound by residues Tyr71, Ala104 to Lys105, Tyr128, Asn174, Tyr205, and Ser233 to Ser235. Lys105, Tyr128, and Asn174 together coordinate substrate. Lys236 is modified (N6-(pyridoxal phosphate)lysine). The pyridoxal 5'-phosphate site is built by Arg244 and Asn275. Residues Asn275 and Arg368 each coordinate substrate.

This sequence belongs to the class-I pyridoxal-phosphate-dependent aminotransferase family. LL-diaminopimelate aminotransferase subfamily. In terms of assembly, homodimer. Pyridoxal 5'-phosphate is required as a cofactor.

The catalysed reaction is (2S,6S)-2,6-diaminopimelate + 2-oxoglutarate = (S)-2,3,4,5-tetrahydrodipicolinate + L-glutamate + H2O + H(+). It participates in amino-acid biosynthesis; L-lysine biosynthesis via DAP pathway; LL-2,6-diaminopimelate from (S)-tetrahydrodipicolinate (aminotransferase route): step 1/1. Its function is as follows. Involved in the synthesis of meso-diaminopimelate (m-DAP or DL-DAP), required for both lysine and peptidoglycan biosynthesis. Catalyzes the direct conversion of tetrahydrodipicolinate to LL-diaminopimelate. This Chlamydia pneumoniae (Chlamydophila pneumoniae) protein is LL-diaminopimelate aminotransferase.